A 253-amino-acid chain; its full sequence is Ubiquinone/menaquinone biosynthesis C-methyltransferase UbiE (253 aa).

Residues Thr-76, Asp-97, 125–126 (NA), and Ser-142 contribute to the S-adenosyl-L-methionine site.

Belongs to the class I-like SAM-binding methyltransferase superfamily. MenG/UbiE family.

It catalyses the reaction a 2-demethylmenaquinol + S-adenosyl-L-methionine = a menaquinol + S-adenosyl-L-homocysteine + H(+). The catalysed reaction is a 2-methoxy-6-(all-trans-polyprenyl)benzene-1,4-diol + S-adenosyl-L-methionine = a 5-methoxy-2-methyl-3-(all-trans-polyprenyl)benzene-1,4-diol + S-adenosyl-L-homocysteine + H(+). It functions in the pathway quinol/quinone metabolism; menaquinone biosynthesis; menaquinol from 1,4-dihydroxy-2-naphthoate: step 2/2. Its pathway is cofactor biosynthesis; ubiquinone biosynthesis. In terms of biological role, methyltransferase required for the conversion of demethylmenaquinol (DMKH2) to menaquinol (MKH2) and the conversion of 2-polyprenyl-6-methoxy-1,4-benzoquinol (DDMQH2) to 2-polyprenyl-3-methyl-6-methoxy-1,4-benzoquinol (DMQH2). The sequence is that of Ubiquinone/menaquinone biosynthesis C-methyltransferase UbiE from Xanthomonas oryzae pv. oryzae (strain MAFF 311018).